The primary structure comprises 390 residues: Chorismate synthase (390 aa).

2 residues coordinate NADP(+): R48 and R54. Residues 132 to 134 (RSS), 244 to 245 (NA), G289, 304 to 308 (KPTSS), and R330 contribute to the FMN site. A disordered region spans residues 362 to 390 (VGAHPAGAHPAGADPAGTHPGGPGGFQPG). Over residues 363-379 (GAHPAGAHPAGADPAGT) the composition is skewed to low complexity. Positions 380–390 (HPGGPGGFQPG) are enriched in gly residues.

It belongs to the chorismate synthase family. In terms of assembly, homotetramer. The cofactor is FMNH2.

The catalysed reaction is 5-O-(1-carboxyvinyl)-3-phosphoshikimate = chorismate + phosphate. It participates in metabolic intermediate biosynthesis; chorismate biosynthesis; chorismate from D-erythrose 4-phosphate and phosphoenolpyruvate: step 7/7. Catalyzes the anti-1,4-elimination of the C-3 phosphate and the C-6 proR hydrogen from 5-enolpyruvylshikimate-3-phosphate (EPSP) to yield chorismate, which is the branch point compound that serves as the starting substrate for the three terminal pathways of aromatic amino acid biosynthesis. This reaction introduces a second double bond into the aromatic ring system. The sequence is that of Chorismate synthase from Methylobacterium sp. (strain 4-46).